The chain runs to 1051 residues: Putative helicase/primase complex protein (1051 aa).

It belongs to the asfivirus F1055L family.

Functionally, may be involved in DNA replication. In Ornithodoros (relapsing fever ticks), this protein is Putative helicase/primase complex protein.